The primary structure comprises 402 residues: Renin (402 aa).

A signal peptide spans 1–26 (MGGRRMPLWALLLLWTSCSFSLPTDT). Positions 27–64 (ASFGRILLKKMPSVREILEERGVDMTRISAEWGEFIKK) are cleaved as a propeptide — activation peptide. A glycan (N-linked (GlcNAc...) asparagine) is linked at N69. Positions 84–399 (YYGEIGIGTP…DRHNNRIGFA (316 aa)) constitute a Peptidase A1 domain. The active site involves D102. A disulfide bond links C115 and C122. An N-linked (GlcNAc...) asparagine glycan is attached at N139. Residues C278 and C282 are joined by a disulfide bond. The active site involves D287. N320 is a glycosylation site (N-linked (GlcNAc...) asparagine). C321 and C358 are oxidised to a cystine.

This sequence belongs to the peptidase A1 family. As to quaternary structure, interacts with ATP6AP2.

The protein localises to the secreted. It is found in the membrane. It catalyses the reaction Cleavage of Leu-|-Xaa bond in angiotensinogen to generate angiotensin I.. With respect to regulation, interaction with ATP6AP2 results in a 5-fold increased efficiency in angiotensinogen processing. In terms of biological role, renin is a highly specific endopeptidase, whose only known function is to generate angiotensin I from angiotensinogen in the plasma, initiating a cascade of reactions that produce an elevation of blood pressure and increased sodium retention by the kidney. The polypeptide is Renin (Ren1) (Rattus norvegicus (Rat)).